The following is a 388-amino-acid chain: Protein RecA (388 aa).

79–86 (GPESSGKT) contacts ATP. Residues 347 to 388 (IDGEEVSEQDTENKKDEPKKEEAVNEEVPLDLGDELEIEIEE) are disordered. Over residues 357-369 (TENKKDEPKKEEA) the composition is skewed to basic and acidic residues. Residues 370–388 (VNEEVPLDLGDELEIEIEE) are compositionally biased toward acidic residues.

The protein belongs to the RecA family.

The protein resides in the cytoplasm. Can catalyze the hydrolysis of ATP in the presence of single-stranded DNA, the ATP-dependent uptake of single-stranded DNA by duplex DNA, and the ATP-dependent hybridization of homologous single-stranded DNAs. It interacts with LexA causing its activation and leading to its autocatalytic cleavage. The polypeptide is Protein RecA (Streptococcus pneumoniae (strain Hungary19A-6)).